We begin with the raw amino-acid sequence, 192 residues long: Peptidyl-tRNA hydrolase (192 aa).

Tyrosine 17 serves as a coordination point for tRNA. Histidine 22 (proton acceptor) is an active-site residue. Positions 68, 70, and 116 each coordinate tRNA.

Belongs to the PTH family. Monomer.

It is found in the cytoplasm. It catalyses the reaction an N-acyl-L-alpha-aminoacyl-tRNA + H2O = an N-acyl-L-amino acid + a tRNA + H(+). In terms of biological role, hydrolyzes ribosome-free peptidyl-tRNAs (with 1 or more amino acids incorporated), which drop off the ribosome during protein synthesis, or as a result of ribosome stalling. Catalyzes the release of premature peptidyl moieties from peptidyl-tRNA molecules trapped in stalled 50S ribosomal subunits, and thus maintains levels of free tRNAs and 50S ribosomes. The polypeptide is Peptidyl-tRNA hydrolase (Hydrogenovibrio crunogenus (strain DSM 25203 / XCL-2) (Thiomicrospira crunogena)).